The primary structure comprises 266 residues: Mitochondrial S-adenosylmethionine carrier protein (266 aa).

Solcar repeat units lie at residues 4–77 (RELC…AKRF), 85–167 (LSPI…LKNL), and 176–264 (VDCW…VRSS). A run of 6 helical transmembrane segments spans residues 5–25 (ELCASLLAGGAAGMSVDLILF), 49–69 (IYAGVPSTAVGSFPNAAAFFV), 84–104 (YLSPIIHMAAAFLGELVACLI), 141–161 (RGYKSTVLREIPFSLVQFPLW), 181–201 (SAVCGAFAGGFAAAVTTPLDV), and 237–257 (FAGVIPRMTMISLGGFIFLGA).

This sequence belongs to the mitochondrial carrier (TC 2.A.29) family.

The protein localises to the mitochondrion inner membrane. The enzyme catalyses S-adenosyl-L-homocysteine(out) + S-adenosyl-L-methionine(in) = S-adenosyl-L-homocysteine(in) + S-adenosyl-L-methionine(out). Functionally, mitochondrial S-adenosyl-L-methionine/S-adenosyl-L-homocysteine antiporter. Mediates the exchange of cytosolic S-adenosyl-L-methionine, the predominant methyl-group donor for macromolecule methylation processes, for mitochondrial S-adenosylhomocysteine(SAH), a by-product of methylation reactions. The polypeptide is Mitochondrial S-adenosylmethionine carrier protein (slc25a26) (Xenopus laevis (African clawed frog)).